A 213-amino-acid polypeptide reads, in one-letter code: Na(+)-translocating NADH-quinone reductase subunit D (213 aa).

Helical transmembrane passes span Ile21–Ala41, Ile42–Leu62, Ile77–Ile97, Leu101–Leu121, Phe131–Ile151, Glu153–Ser173, and Leu183–Val203.

The protein belongs to the NqrDE/RnfAE family. As to quaternary structure, composed of six subunits; NqrA, NqrB, NqrC, NqrD, NqrE and NqrF.

The protein resides in the cell inner membrane. The catalysed reaction is a ubiquinone + n Na(+)(in) + NADH + H(+) = a ubiquinol + n Na(+)(out) + NAD(+). Functionally, NQR complex catalyzes the reduction of ubiquinone-1 to ubiquinol by two successive reactions, coupled with the transport of Na(+) ions from the cytoplasm to the periplasm. NqrA to NqrE are probably involved in the second step, the conversion of ubisemiquinone to ubiquinol. The protein is Na(+)-translocating NADH-quinone reductase subunit D of Chlamydia pneumoniae (Chlamydophila pneumoniae).